We begin with the raw amino-acid sequence, 98 residues long: UPF0251 protein SO_0727 (98 aa).

This sequence belongs to the UPF0251 family.

The protein is UPF0251 protein SO_0727 of Shewanella oneidensis (strain ATCC 700550 / JCM 31522 / CIP 106686 / LMG 19005 / NCIMB 14063 / MR-1).